The sequence spans 823 residues: Leucine--tRNA ligase (823 aa).

The 'HIGH' region signature appears at 42 to 52 (PYPSGTLHMGH). The short motif at 575–579 (KMSKS) is the 'KMSKS' region element. Lysine 578 is a binding site for ATP.

It belongs to the class-I aminoacyl-tRNA synthetase family.

The protein resides in the cytoplasm. The enzyme catalyses tRNA(Leu) + L-leucine + ATP = L-leucyl-tRNA(Leu) + AMP + diphosphate. The protein is Leucine--tRNA ligase of Legionella pneumophila (strain Corby).